The primary structure comprises 37 residues: Large ribosomal subunit protein bL36 (37 aa).

This sequence belongs to the bacterial ribosomal protein bL36 family.

The sequence is that of Large ribosomal subunit protein bL36 from Desulfotalea psychrophila (strain LSv54 / DSM 12343).